The following is a 125-amino-acid chain: S-adenosylmethionine decarboxylase proenzyme (125 aa).

Serine 71 acts as the Schiff-base intermediate with substrate; via pyruvic acid in catalysis. Serine 71 is modified (pyruvic acid (Ser); by autocatalysis). Histidine 76 acts as the Proton acceptor; for processing activity in catalysis. Cysteine 91 functions as the Proton donor; for catalytic activity in the catalytic mechanism.

The protein belongs to the prokaryotic AdoMetDC family. Type 1 subfamily. Heterotetramer of two alpha and two beta chains arranged as a dimer of alpha/beta heterodimers. It depends on pyruvate as a cofactor. Is synthesized initially as an inactive proenzyme. Formation of the active enzyme involves a self-maturation process in which the active site pyruvoyl group is generated from an internal serine residue via an autocatalytic post-translational modification. Two non-identical subunits are generated from the proenzyme in this reaction, and the pyruvate is formed at the N-terminus of the alpha chain, which is derived from the carboxyl end of the proenzyme. The post-translation cleavage follows an unusual pathway, termed non-hydrolytic serinolysis, in which the side chain hydroxyl group of the serine supplies its oxygen atom to form the C-terminus of the beta chain, while the remainder of the serine residue undergoes an oxidative deamination to produce ammonia and the pyruvoyl group blocking the N-terminus of the alpha chain.

It carries out the reaction S-adenosyl-L-methionine + H(+) = S-adenosyl 3-(methylsulfanyl)propylamine + CO2. Its pathway is amine and polyamine biosynthesis; S-adenosylmethioninamine biosynthesis; S-adenosylmethioninamine from S-adenosyl-L-methionine: step 1/1. Functionally, catalyzes the decarboxylation of S-adenosylmethionine to S-adenosylmethioninamine (dcAdoMet), the propylamine donor required for the synthesis of the polyamines spermine and spermidine from the diamine putrescine. This is S-adenosylmethionine decarboxylase proenzyme from Pyrobaculum aerophilum (strain ATCC 51768 / DSM 7523 / JCM 9630 / CIP 104966 / NBRC 100827 / IM2).